Here is a 736-residue protein sequence, read N- to C-terminus: MTSTGKDGGAQHAQYVGPYRLEKTLGKGQTGLVKLGVHCVTCQKVAIKIVNREKLSESVLMKVEREIAILKLIEHPHVLKLHDVYENKKYLYLVLEHVSGGELFDYLVKKGRLTPKEARKFFRQIISALDFCHSHSICHRDLKPENLLLDEKNNIRIADFGMASLQVGDSLLETSCGSPHYACPEVIRGEKYDGRKADVWSCGVILFALLVGALPFDDDNLRQLLEKVKRGVFHMPHFIPPDCQSLLRGMIEVDAARRLTLEHIQKHIWYIGGKNEPEPEQPIPRKVQIRSLPSLEDIDPDVLDSMHSLGCFRDRNKLLQDLLSEEENQEKMIYFLLLDRKERYPSQEDEDLPPRNEIDPPRKRVDSPMLNRHGKRRPERKSMEVLSVTDGGSPVPARRAIEMAQHGQRSRSISGASSGLSTSPLSSPRVTPHPSPRGSPLPTPKGTPVHTPKESPAGTPNPTPPSSPSVGGVPWRARLNSIKNSFLGSPRFHRRKLQVPTPEEMSNLTPESSPELAKKSWFGNFISLEKEEQIFVVIKDKPLSSIKADIVHAFLSIPSLSHSVISQTSFRAEYKATGGPAVFQKPVKFQVDITYTEGGEAQKENGIYSVTFTLLSGPSRRFKRVVETIQAQLLSTHDPPAAQHLSDTTNCMEMMTGRLSKCGSPLSNFFDVIKQLFSDEKNGQAAQAPSTPAKRSAHGPLGDSAAAGPGPGGDAEYPTGKDTAKMGPPTARREQP.

Residues 19 to 270 (YRLEKTLGKG…LEHIQKHIWY (252 aa)) enclose the Protein kinase domain. ATP-binding positions include 25 to 33 (LGKGQTGLV) and Lys48. Asp141 serves as the catalytic Proton acceptor. Position 174 is a phosphothreonine; by LKB1 (Thr174). Thr260 bears the Phosphothreonine; by PKA mark. Residue Ser294 is modified to Phosphoserine. The UBA domain maps to 297–339 (DIDPDVLDSMHSLGCFRDRNKLLQDLLSEEENQEKMIYFLLLD). The segment covering 345-366 (PSQEDEDLPPRNEIDPPRKRVD) has biased composition (basic and acidic residues). Disordered regions lie at residues 345 to 475 (PSQE…GVPW) and 493 to 513 (HRRKLQVPTPEEMSNLTPESS). Phosphoserine is present on residues Ser367, Ser382, Ser393, Ser412, Ala416, Ser423, and Ser427. Low complexity predominate over residues 410–428 (SRSISGASSGLSTSPLSSP). The segment covering 431–445 (TPHPSPRGSPLPTPK) has biased composition (pro residues). Residue Ser455 is modified to Phosphoserine. Residues Thr459, Thr463, and Thr509 each carry the phosphothreonine modification. Ser512, Ser513, and Ser520 each carry phosphoserine. A KEN box motif is present at residues 603–605 (KEN). A disordered region spans residues 681 to 736 (KNGQAAQAPSTPAKRSAHGPLGDSAAAGPGPGGDAEYPTGKDTAKMGPPTARREQP). Low complexity predominate over residues 699-708 (GPLGDSAAAG).

It belongs to the protein kinase superfamily. CAMK Ser/Thr protein kinase family. SNF1 subfamily. As to quaternary structure, interacts with FZR1, a regulatory subunit of the APC ubiquitin ligase complex. Interacts with COPS5. Interacts with PAK1. It depends on Mg(2+) as a cofactor. Phosphorylated at Thr-174 by STK11/LKB1 in complex with STE20-related adapter-alpha (STRADA) pseudo kinase and CAB39. Not phosphorylated at Thr-174 by CaMKK2. In contrast, it is phosphorylated and activated by CaMKK1. May be inactivated via dephosphorylation of Thr-174 by PP2C. Phosphorylated at Thr-260 by PKA. Phosphorylation at Thr-260 by PKA was not observed in another study, but this may reflect differences in the experimental approach. Phosphorylation at Thr-260 seems to play a role in the regulation of insulin secretion. Post-translationally, polyubiquitinated by the APC complex in conjunction with FZR1, leading to its proteasomal degradation. Targeted for proteasomal degradation by interaction with COPS5. BRSK2 levels change during the cell cycle. BRSK2 levels are low at the G1/S boundary and gradually increase as cells progress into G2 phase. BRSK2 levels decrease rapidly at the end of mitosis. As to expression, detected in pancreas islets (at protein level).

The protein localises to the cytoplasm. Its subcellular location is the cytoskeleton. It is found in the microtubule organizing center. The protein resides in the centrosome. It localises to the perinuclear region. The protein localises to the endoplasmic reticulum. The enzyme catalyses L-seryl-[protein] + ATP = O-phospho-L-seryl-[protein] + ADP + H(+). It catalyses the reaction L-threonyl-[protein] + ATP = O-phospho-L-threonyl-[protein] + ADP + H(+). The catalysed reaction is L-seryl-[tau protein] + ATP = O-phospho-L-seryl-[tau protein] + ADP + H(+). It carries out the reaction L-threonyl-[tau protein] + ATP = O-phospho-L-threonyl-[tau protein] + ADP + H(+). Its activity is regulated as follows. Activated by phosphorylation on Thr-174 by STK11/LKB1. Functionally, serine/threonine-protein kinase that plays a key role in polarization of neurons and axonogenesis, cell cycle progress and insulin secretion. Phosphorylates CDK16, CDC25C, MAPT/TAU, PAK1 and WEE1. Following phosphorylation and activation by STK11/LKB1, acts as a key regulator of polarization of cortical neurons, probably by mediating phosphorylation of microtubule-associated proteins such as MAPT/TAU at 'Thr-529' and 'Ser-579'. Also regulates neuron polarization by mediating phosphorylation of WEE1 at 'Ser-642' in postmitotic neurons, leading to down-regulate WEE1 activity in polarized neurons. Plays a role in the regulation of the mitotic cell cycle progress and the onset of mitosis. Plays a role in the regulation of insulin secretion in response to elevated glucose levels, probably via phosphorylation of CDK16 and PAK1. While BRSK2 phosphorylated at Thr-174 can inhibit insulin secretion, BRSK2 phosphorylated at Thr-260 can promote insulin secretion. Regulates reorganization of the actin cytoskeleton. May play a role in the apoptotic response triggered by endoplasmic reticulum (ER) stress. In Homo sapiens (Human), this protein is Serine/threonine-protein kinase BRSK2 (BRSK2).